Here is a 493-residue protein sequence, read N- to C-terminus: Guanosine-5'-triphosphate,3'-diphosphate pyrophosphatase (493 aa).

The protein belongs to the GppA/Ppx family. GppA subfamily.

The catalysed reaction is guanosine 3'-diphosphate 5'-triphosphate + H2O = guanosine 3',5'-bis(diphosphate) + phosphate + H(+). Its pathway is purine metabolism; ppGpp biosynthesis; ppGpp from GTP: step 2/2. Catalyzes the conversion of pppGpp to ppGpp. Guanosine pentaphosphate (pppGpp) is a cytoplasmic signaling molecule which together with ppGpp controls the 'stringent response', an adaptive process that allows bacteria to respond to amino acid starvation, resulting in the coordinated regulation of numerous cellular activities. In Salmonella gallinarum (strain 287/91 / NCTC 13346), this protein is Guanosine-5'-triphosphate,3'-diphosphate pyrophosphatase.